Consider the following 156-residue polypeptide: Ribonuclease pancreatic (156 aa).

An N-terminal signal peptide occupies residues 1–28 (MALEKSLALLPLLVLVLLVLGWVQPSLG). Basic and acidic residues predominate over residues 33 to 43 (AKKFQRQHMDS). The disordered stretch occupies residues 33 to 52 (AKKFQRQHMDSDGSPSSNPT). Substrate-binding residues include Lys35 and Arg38. The active-site Proton acceptor is His40. 4 disulfide bridges follow: Cys54-Cys112, Cys68-Cys123, Cys86-Cys138, and Cys93-Cys100. N-linked (GlcNAc...) asparagine glycosylation occurs at Asn62. Residue 69-73 (KPVNT) participates in substrate binding. Asn90 carries an N-linked (GlcNAc...) asparagine glycan. The substrate site is built by Lys94 and Arg113. Asn116 carries N-linked (GlcNAc...) asparagine glycosylation. The active-site Proton donor is His147.

This sequence belongs to the pancreatic ribonuclease family. Monomer. Interacts with and forms tight 1:1 complexes with RNH1. Dimerization of two such complexes may occur. Interaction with RNH1 inhibits this protein.

The protein localises to the secreted. It catalyses the reaction an [RNA] containing cytidine + H2O = an [RNA]-3'-cytidine-3'-phosphate + a 5'-hydroxy-ribonucleotide-3'-[RNA].. The catalysed reaction is an [RNA] containing uridine + H2O = an [RNA]-3'-uridine-3'-phosphate + a 5'-hydroxy-ribonucleotide-3'-[RNA].. Endonuclease that catalyzes the cleavage of RNA on the 3' side of pyrimidine nucleotides. Acts on single-stranded and double-stranded RNA. The polypeptide is Ribonuclease pancreatic (RNASE1) (Ateles geoffroyi (Black-handed spider monkey)).